An 88-amino-acid polypeptide reads, in one-letter code: Small ribosomal subunit protein uS17 (88 aa).

The protein belongs to the universal ribosomal protein uS17 family. Part of the 30S ribosomal subunit.

Its function is as follows. One of the primary rRNA binding proteins, it binds specifically to the 5'-end of 16S ribosomal RNA. In Synechococcus sp. (strain WH7803), this protein is Small ribosomal subunit protein uS17.